We begin with the raw amino-acid sequence, 715 residues long: Polyribonucleotide nucleotidyltransferase (715 aa).

Residues Asp490 and Asp496 each contribute to the Mg(2+) site. One can recognise a KH domain in the interval 557–616; that stretch reads PRIETMTIPTDKIREVIGSGGKVIREIVETSGAKVDISDDGTIKIASANADSIKKAYDMI. The S1 motif domain maps to 626–694; that stretch reads GKIYVGKVVK…DRGKVRLGMK (69 aa).

It belongs to the polyribonucleotide nucleotidyltransferase family. It depends on Mg(2+) as a cofactor.

Its subcellular location is the cytoplasm. It carries out the reaction RNA(n+1) + phosphate = RNA(n) + a ribonucleoside 5'-diphosphate. Functionally, involved in mRNA degradation. Catalyzes the phosphorolysis of single-stranded polyribonucleotides processively in the 3'- to 5'-direction. This chain is Polyribonucleotide nucleotidyltransferase, found in Paracoccus denitrificans (strain Pd 1222).